A 72-amino-acid polypeptide reads, in one-letter code: Translation initiation factor IF-1 (72 aa).

The S1-like domain maps to 1 to 72 (MPKEEVLEFP…TKGRITYRFK (72 aa)).

Belongs to the IF-1 family. In terms of assembly, component of the 30S ribosomal translation pre-initiation complex which assembles on the 30S ribosome in the order IF-2 and IF-3, IF-1 and N-formylmethionyl-tRNA(fMet); mRNA recruitment can occur at any time during PIC assembly.

It localises to the cytoplasm. One of the essential components for the initiation of protein synthesis. Stabilizes the binding of IF-2 and IF-3 on the 30S subunit to which N-formylmethionyl-tRNA(fMet) subsequently binds. Helps modulate mRNA selection, yielding the 30S pre-initiation complex (PIC). Upon addition of the 50S ribosomal subunit IF-1, IF-2 and IF-3 are released leaving the mature 70S translation initiation complex. The protein is Translation initiation factor IF-1 of Rhizobium etli (strain ATCC 51251 / DSM 11541 / JCM 21823 / NBRC 15573 / CFN 42).